Here is an 83-residue protein sequence, read N- to C-terminus: Cytochrome c oxidase subunit 12, mitochondrial (83 aa).

The region spanning 24–67 is the CHCH domain; the sequence is TKHCWQSYVDYHKCVNMKGEDFAPCKVFWKTYNALCPLDWIEKW. The Cx9C motif motif lies at 27–37; sequence CWQSYVDYHKC. 2 disulfide bridges follow: cysteine 27-cysteine 59 and cysteine 37-cysteine 48. Positions 48 to 59 match the Cx10C motif motif; the sequence is CKVFWKTYNALC. Serine 82 carries the post-translational modification Phosphoserine.

This sequence belongs to the cytochrome c oxidase subunit 6B family. Component of the cytochrome c oxidase (complex IV, CIV), a multisubunit enzyme composed of 12 subunits. The complex is composed of a catalytic core of 3 subunits COX1, COX2 and COX3, encoded in the mitochondrial DNA, and 9 supernumerary subunits COX4, COX5A (or COX5B), COX6, COX7, COX8, COX9, COX12, COX13 and COX26, which are encoded in the nuclear genome. The complex exists as a monomer or a dimer and forms supercomplexes (SCs) in the inner mitochondrial membrane with a dimer of ubiquinol-cytochrome c oxidoreductase (cytochrome b-c1 complex, complex III, CIII), resulting in 2 different assemblies (supercomplexes III(2)IV and III(2)IV(2)).

It is found in the mitochondrion inner membrane. Its pathway is energy metabolism; oxidative phosphorylation. In terms of biological role, component of the cytochrome c oxidase, the last enzyme in the mitochondrial electron transport chain which drives oxidative phosphorylation. The respiratory chain contains 3 multisubunit complexes succinate dehydrogenase (complex II, CII), ubiquinol-cytochrome c oxidoreductase (cytochrome b-c1 complex, complex III, CIII) and cytochrome c oxidase (complex IV, CIV), that cooperate to transfer electrons derived from NADH and succinate to molecular oxygen, creating an electrochemical gradient over the inner membrane that drives transmembrane transport and the ATP synthase. Cytochrome c oxidase is the component of the respiratory chain that catalyzes the reduction of oxygen to water. Electrons originating from reduced cytochrome c in the intermembrane space (IMS) are transferred via the dinuclear copper A center (CU(A)) of COX2 and heme A of COX1 to the active site in COX1, a binuclear center (BNC) formed by heme A3 and copper B (CU(B)). The BNC reduces molecular oxygen to 2 water molecules unsing 4 electrons from cytochrome c in the IMS and 4 protons from the mitochondrial matrix. The protein is Cytochrome c oxidase subunit 12, mitochondrial (COX12) of Saccharomyces cerevisiae (strain ATCC 204508 / S288c) (Baker's yeast).